Consider the following 511-residue polypeptide: ATP synthase subunit alpha (511 aa).

170-177 contacts ATP; it reads GDRQTGKT.

Belongs to the ATPase alpha/beta chains family. As to quaternary structure, F-type ATPases have 2 components, CF(1) - the catalytic core - and CF(0) - the membrane proton channel. CF(1) has five subunits: alpha(3), beta(3), gamma(1), delta(1), epsilon(1). CF(0) has three main subunits: a(1), b(2) and c(9-12). The alpha and beta chains form an alternating ring which encloses part of the gamma chain. CF(1) is attached to CF(0) by a central stalk formed by the gamma and epsilon chains, while a peripheral stalk is formed by the delta and b chains.

The protein resides in the cell inner membrane. The catalysed reaction is ATP + H2O + 4 H(+)(in) = ADP + phosphate + 5 H(+)(out). Produces ATP from ADP in the presence of a proton gradient across the membrane. The alpha chain is a regulatory subunit. The sequence is that of ATP synthase subunit alpha from Granulibacter bethesdensis (strain ATCC BAA-1260 / CGDNIH1).